The following is a 965-amino-acid chain: Valine--tRNA ligase (965 aa).

The tract at residues 1-22 (MENTPSHINKTEPSLDKTYSPQ) is disordered. The 'HIGH' region signature appears at 56–66 (PNVTGSLHMGH). Residues 568-572 (KMSKS) carry the 'KMSKS' region motif. ATP is bound at residue lysine 571. Positions 896-965 (LIDKATELDR…IEQQATIAAL (70 aa)) form a coiled coil.

It belongs to the class-I aminoacyl-tRNA synthetase family. ValS type 1 subfamily. In terms of assembly, monomer.

Its subcellular location is the cytoplasm. It catalyses the reaction tRNA(Val) + L-valine + ATP = L-valyl-tRNA(Val) + AMP + diphosphate. Its function is as follows. Catalyzes the attachment of valine to tRNA(Val). As ValRS can inadvertently accommodate and process structurally similar amino acids such as threonine, to avoid such errors, it has a 'posttransfer' editing activity that hydrolyzes mischarged Thr-tRNA(Val) in a tRNA-dependent manner. This chain is Valine--tRNA ligase, found in Yersinia pestis.